The chain runs to 345 residues: Methylthioribose-1-phosphate isomerase (345 aa).

Substrate-binding positions include 44–46 (RGA), arginine 87, and glutamine 194. Aspartate 235 acts as the Proton donor in catalysis. A substrate-binding site is contributed by 245 to 246 (NK).

The protein belongs to the eIF-2B alpha/beta/delta subunits family. MtnA subfamily.

It carries out the reaction 5-(methylsulfanyl)-alpha-D-ribose 1-phosphate = 5-(methylsulfanyl)-D-ribulose 1-phosphate. It participates in amino-acid biosynthesis; L-methionine biosynthesis via salvage pathway; L-methionine from S-methyl-5-thio-alpha-D-ribose 1-phosphate: step 1/6. Its function is as follows. Catalyzes the interconversion of methylthioribose-1-phosphate (MTR-1-P) into methylthioribulose-1-phosphate (MTRu-1-P). The protein is Methylthioribose-1-phosphate isomerase of Heliobacterium modesticaldum (strain ATCC 51547 / Ice1).